Here is a 450-residue protein sequence, read N- to C-terminus: Adenosylhomocysteinase (450 aa).

Substrate is bound by residues threonine 59, aspartate 135, and glutamate 160. 161-163 contributes to the NAD(+) binding site; the sequence is TTT. Lysine 190 and aspartate 194 together coordinate substrate. NAD(+)-binding positions include asparagine 195, 224–229, glutamate 247, 303–305, and asparagine 350; these read GFGDVG and IGH.

The protein belongs to the adenosylhomocysteinase family. NAD(+) is required as a cofactor.

The protein resides in the cytoplasm. The enzyme catalyses S-adenosyl-L-homocysteine + H2O = L-homocysteine + adenosine. The protein operates within amino-acid biosynthesis; L-homocysteine biosynthesis; L-homocysteine from S-adenosyl-L-homocysteine: step 1/1. Its function is as follows. Adenosylhomocysteine is a competitive inhibitor of S-adenosyl-L-methionine-dependent methyl transferase reactions; therefore adenosylhomocysteinase may play a key role in the control of methylations via regulation of the intracellular concentration of adenosylhomocysteine. The chain is Adenosylhomocysteinase (SAH1) from Candida albicans (strain SC5314 / ATCC MYA-2876) (Yeast).